The sequence spans 121 residues: Autophagy-related protein 8 (121 aa).

A lipid anchor (Phosphatidylethanolamine amidated glycine) is attached at Gly-116. A propeptide spans 117 to 121 (removed in mature form); the sequence is DFETA.

It belongs to the ATG8 family. In terms of processing, the C-terminal 5 residues are removed to expose Gly-116 at the C-terminus. The C-terminal Gly is then amidated with phosphatidylethanolamine by an activating system similar to that for ubiquitin.

The protein localises to the cytoplasmic vesicle. It is found in the autophagosome membrane. It localises to the vacuole membrane. Functionally, ubiquitin-like modifier involved in autophagosome formation. With cpr-1/atg4, mediates the delivery of the autophagosomes to the vacuole via the microtubule cytoskeleton. Required for selective autophagic degradation of the nucleus (nucleophagy) as well as for mitophagy which contributes to regulate mitochondrial quantity and quality by eliminating the mitochondria to a basal level to fulfill cellular energy requirements and preventing excess ROS production. Also participates in membrane fusion events that take place in the early secretory pathway. Also involved in endoplasmic reticulum-specific autophagic process and is essential for the survival of cells subjected to severe ER stress. The apg-6/atg8-PE conjugate mediates tethering between adjacent membranes and stimulates membrane hemifusion, leading to expansion of the autophagosomal membrane during autophagy. The protein is Autophagy-related protein 8 (apg-6) of Neurospora crassa (strain ATCC 24698 / 74-OR23-1A / CBS 708.71 / DSM 1257 / FGSC 987).